The primary structure comprises 81 residues: Acyl carrier protein (81 aa).

The region spanning 2-80 is the Carrier domain; sequence ASKDEILAGL…DAVNFIDNAQ (79 aa). Position 40 is an O-(pantetheine 4'-phosphoryl)serine (Ser40).

Belongs to the acyl carrier protein (ACP) family. In terms of processing, 4'-phosphopantetheine is transferred from CoA to a specific serine of apo-ACP by AcpS. This modification is essential for activity because fatty acids are bound in thioester linkage to the sulfhydryl of the prosthetic group.

The protein resides in the cytoplasm. It participates in lipid metabolism; fatty acid biosynthesis. Functionally, carrier of the growing fatty acid chain in fatty acid biosynthesis. The protein is Acyl carrier protein of Kocuria rhizophila (strain ATCC 9341 / DSM 348 / NBRC 103217 / DC2201).